A 293-amino-acid chain; its full sequence is Probable 2-(5''-triphosphoribosyl)-3'-dephosphocoenzyme-A synthase (293 aa).

Belongs to the CitG/MdcB family.

The catalysed reaction is 3'-dephospho-CoA + ATP = 2'-(5''-triphospho-alpha-D-ribosyl)-3'-dephospho-CoA + adenine. In terms of biological role, involved in the formation of 2-(5''-phosphoribosyl)-3'-dephosphocoenzyme-A, the prosthetic group of the acyl-carrier protein of the malonate decarboxylase. The protein is Probable 2-(5''-triphosphoribosyl)-3'-dephosphocoenzyme-A synthase of Pseudomonas paraeruginosa (strain DSM 24068 / PA7) (Pseudomonas aeruginosa (strain PA7)).